The sequence spans 542 residues: Pre-mRNA-splicing factor 38B (542 aa).

Over residues 1–12 (MANNSPALTGNS) the composition is skewed to polar residues. A disordered region spans residues 1 to 24 (MANNSPALTGNSQPQHQAAAAVVQ). N-acetylalanine is present on Ala-2. Position 5 is a phosphoserine (Ser-5). Over residues 13-24 (QPQHQAAAAVVQ) the composition is skewed to low complexity. At Lys-227 the chain carries N6-acetyllysine. The disordered stretch occupies residues 232 to 542 (QIKTRPRKIK…KEHKNKDETV (311 aa)). Over residues 243 to 255 (DGKEGVEEIDRHI) the composition is skewed to basic and acidic residues. Residues 256–284 (ERRRSRSPRRSLSPRRSPRRSRSRSHHRD) show a composition bias toward basic residues. 4 positions are modified to phosphoserine: Ser-288, Ser-290, Ser-318, and Ser-320. Basic and acidic residues predominate over residues 291 to 327 (FDRELEREKERQRLEREAKEREKERRRSRSLDRGLDR). Residues 292–323 (DRELEREKERQRLEREAKEREKERRRSRSLDR) adopt a coiled-coil conformation. The span at 328-344 (RRSRSRERHRSRSRSRD) shows a compositional bias: basic residues. Residues 345 to 418 (RKGDRRDRDR…DRRHRDDKKE (74 aa)) show a composition bias toward basic and acidic residues. Residues 419–448 (SKKKHSRSRSRERKHRSRSRSRNAGKRSRS) show a composition bias toward basic residues. Ser-446 is subject to Phosphoserine. The span at 449-466 (RSKDKASKHKNESKEKSN) shows a compositional bias: basic and acidic residues. 3 positions are modified to phosphoserine: Ser-471, Ser-473, and Ser-479. Composition is skewed to basic and acidic residues over residues 479-492 (SVEK…PSRE) and 499-522 (RSQD…DHQR). 3 positions are modified to phosphoserine: Ser-523, Ser-525, and Ser-530. The segment covering 530–542 (SQEKEHKNKDETV) has biased composition (basic and acidic residues).

Belongs to the PRP38 family.

It is found in the nucleus. May be required for pre-mRNA splicing. The sequence is that of Pre-mRNA-splicing factor 38B (Prpf38b) from Rattus norvegicus (Rat).